The sequence spans 152 residues: Transcriptional regulator MraZ (152 aa).

2 SpoVT-AbrB domains span residues alanine 5–glutamate 52 and alanine 81–alanine 124.

It belongs to the MraZ family. Forms oligomers.

The protein localises to the cytoplasm. The protein resides in the nucleoid. This chain is Transcriptional regulator MraZ, found in Shewanella denitrificans (strain OS217 / ATCC BAA-1090 / DSM 15013).